A 141-amino-acid polypeptide reads, in one-letter code: Mite group 2 allergen Tyr p 2 (141 aa).

The signal sequence occupies residues 1–15 (MKFLILFALVAVAAA). 3 disulfides stabilise this stretch: Cys23–Cys132, Cys36–Cys41, and Cys87–Cys92. N-linked (GlcNAc...) asparagine glycosylation occurs at Asn103.

It belongs to the NPC2 family.

The protein resides in the secreted. This is Mite group 2 allergen Tyr p 2 from Tyrophagus putrescentiae (Mold mite).